Here is a 215-residue protein sequence, read N- to C-terminus: 3-demethoxyubiquinol 3-hydroxylase (215 aa).

Fe cation-binding residues include Glu-64, Glu-94, His-97, Glu-146, Glu-178, and His-181.

The protein belongs to the COQ7 family. It depends on Fe cation as a cofactor.

The protein localises to the cell membrane. It catalyses the reaction a 5-methoxy-2-methyl-3-(all-trans-polyprenyl)benzene-1,4-diol + AH2 + O2 = a 3-demethylubiquinol + A + H2O. It participates in cofactor biosynthesis; ubiquinone biosynthesis. Catalyzes the hydroxylation of 2-nonaprenyl-3-methyl-6-methoxy-1,4-benzoquinol during ubiquinone biosynthesis. This chain is 3-demethoxyubiquinol 3-hydroxylase, found in Pseudomonas paraeruginosa (strain DSM 24068 / PA7) (Pseudomonas aeruginosa (strain PA7)).